Here is a 433-residue protein sequence, read N- to C-terminus: MSDLTDIQEEITRHEQQLVVARQKLKDAERAVEVYPDDVIKNTLQARQQTVSALEDKLADYKRRMADAVSRKKMDTKPTDPTGIEPDDHLKERSSLRYGNVLDVNAIDIEEPSGQTADWYTIGVYVIGFTIPIILKALYMLSTRGRQTVKENKGTRIRFKDDTSFEDINGIRRPKHLYVSMPTAQSTMKAEELTPGRFRTIVCGLFPTQIQVRNIMSPVMGVIGFSFFVKDWPEKIREFMEKECPFIKPEVKPGTPAQEVEFLKRNRVYFMTRQDVLDKNHVADIDKLIDYAASGDPTSPDDIKSPNAPWVFACAPDRSPPTCIYVAGMAELGAFFSILQDMRNTIMASKTVGTAEEKLKRKSSFYQSYLRRTQSMGIQLDQRIILLYMLEWGKEMVDHFHLGDDMDPELRGLAQSLIDQKVKEISNQEPLKI.

The segment at Met-1–Thr-50 is rdRP binding. 2 homomultimerization regions span residues Met-1–Thr-79 and Asn-100–Tyr-125. Residues Met-1–Asn-100 are chaperone activity. A viral panhandle binding region spans residues Met-1–Lys-175. A coiled-coil region spans residues Leu-4–Arg-71. Residues Val-69–Pro-78 are compositionally biased toward basic and acidic residues. A disordered region spans residues Val-69–His-89. Residues Asp-80–Lys-248 form an interaction with glycoprotein N region. The segment at Lys-150 to Lys-175 is interaction with host RPS19. The viral RNA-binding stretch occupies residues Lys-175–Ser-217. Residues Tyr-178–Met-181 carry the YxxL motif. The tract at residues Met-188 to Glu-191 is interaction with host UBE2I/UBC9. The segment at Gly-377–Ile-425 is homomultimerization. An interaction with host DAXX region spans residues Gly-377–Ile-433.

This sequence belongs to the hantavirus nucleocapsid protein family. In terms of assembly, homotrimer. Homomultimer. Homomultimerizes and binds to viral genomic RNA to form the nucleocapsid. Interacts with host MAP1LC3B; this interaction participates to the protection of Gn from virus-triggered autophagy. Interacts with host SNAP29; this interaction participates to the protection of glycoprotein N from virus-triggered autophagy. Interacts (via N-terminus) with host RPS19; this interaction probably mediates the loading of the 40S ribosomal subunit on viral capped mRNA during N-mediated translation initiation. Interacts with the viral RdRp. Interacts with host SUMO1 (via N-terminus). Interacts with host DAXX. Interacts with the viral glycoprotein N (via C-terminus). Interacts with the viral glycoprotein C (via C-terminus).

Its subcellular location is the virion. It localises to the host cytoplasm. The protein localises to the host perinuclear region. It is found in the host Golgi apparatus. The protein resides in the host cis-Golgi network. Its function is as follows. Encapsidates the genome protecting it from nucleases. The encapsidated genomic RNA is termed the nucleocapsid (NC) and serves as template for transcription and replication. The nucleocapsid has a left-handed helical structure. As a trimer, specifically binds and acts as a chaperone to unwind the panhandle structure formed by the viral RNA (vRNA) termini. Involved in the transcription and replication initiation of vRNA by mediating primer annealing. Plays a role in cap snatching by sequestering capped RNAs in P bodies for use by the viral RdRp during transcription initiation. Substitutes for the cellular cap-binding complex (eIF4F) to preferentially facilitate the translation of capped mRNAs. Initiates the translation by specifically binding to the cap and 40S ribosomal subunit. Prevents the viral glycoprotein N (Gn) from autophagy-dependent breakdown maybe by blocking autophagosome formation. Inhibits host EIF2AK2/PKR dimerization to prevent PKR-induced translational shutdown in cells and thus the activation of the antiviral state. Also displays sequence-unspecific DNA endonuclease activity. The sequence is that of Nucleoprotein (N) from Homo sapiens (Human).